The primary structure comprises 140 residues: MSDNEKFNDALWREKLTPEQYRICREKGTERPFTGEYWQEFRPGRYHCRCCGELLFDADTKFDAGCGWPSFYTPATKTAVREQLDTSHGMYRTEVLCRRCDCHLGHVFTDGPEPTGLRYCINSASIVLDSEQVSFTPSTL.

A MsrB domain is found at 9-131; sequence DALWREKLTP…NSASIVLDSE (123 aa). The Zn(2+) site is built by C48, C51, C97, and C100. The active-site Nucleophile is C120.

Belongs to the MsrB Met sulfoxide reductase family. Zn(2+) is required as a cofactor.

The catalysed reaction is L-methionyl-[protein] + [thioredoxin]-disulfide + H2O = L-methionyl-(R)-S-oxide-[protein] + [thioredoxin]-dithiol. The protein is Peptide methionine sulfoxide reductase MsrB of Cellvibrio japonicus (strain Ueda107) (Pseudomonas fluorescens subsp. cellulosa).